A 138-amino-acid chain; its full sequence is MAELQQLRVQEAVDSMVKSLERENIRKMQGLMFRCSAACCEESQASMQQVHQCIERCHAPLAQAQALVTSELEKFQDRLARCTMYCNDKAKDSIDAGSKELHVKRQLETCVTKCVDDHMNLIPTMTRKMKESLSSIGK.

A2 bears the N-acetylalanine mark. A phosphothreonine mark is found at T124 and T126.

This sequence belongs to the FAM136 family.

The chain is Protein FAM136A (FAM136A) from Bos taurus (Bovine).